The sequence spans 159 residues: Transcription elongation factor GreA (159 aa).

The stretch at 45-67 (NAEYHEARKEQSFVEGKIRELQL) forms a coiled coil.

This sequence belongs to the GreA/GreB family.

Necessary for efficient RNA polymerase transcription elongation past template-encoded arresting sites. The arresting sites in DNA have the property of trapping a certain fraction of elongating RNA polymerases that pass through, resulting in locked ternary complexes. Cleavage of the nascent transcript by cleavage factors such as GreA or GreB allows the resumption of elongation from the new 3'terminus. GreA releases sequences of 2 to 3 nucleotides. The sequence is that of Transcription elongation factor GreA from Neorickettsia sennetsu (strain ATCC VR-367 / Miyayama) (Ehrlichia sennetsu).